Consider the following 172-residue polypeptide: Shikimate kinase (172 aa).

11–16 lines the ATP pocket; sequence GTGKTA. Residue Thr-15 participates in Mg(2+) binding. Substrate contacts are provided by Asp-33, Arg-57, and Gly-79. Arg-117 provides a ligand contact to ATP. Arg-136 is a substrate binding site.

Belongs to the shikimate kinase family. As to quaternary structure, monomer. The cofactor is Mg(2+).

It is found in the cytoplasm. The enzyme catalyses shikimate + ATP = 3-phosphoshikimate + ADP + H(+). It participates in metabolic intermediate biosynthesis; chorismate biosynthesis; chorismate from D-erythrose 4-phosphate and phosphoenolpyruvate: step 5/7. In terms of biological role, catalyzes the specific phosphorylation of the 3-hydroxyl group of shikimic acid using ATP as a cosubstrate. This Pelotomaculum thermopropionicum (strain DSM 13744 / JCM 10971 / SI) protein is Shikimate kinase.